The primary structure comprises 360 residues: uncharacterized protein (360 aa).

3 Solcar repeats span residues 34 to 153 (VGVL…LSVW), 172 to 256 (PDWS…FKTN), and 266 to 355 (NPFV…FKFL). 6 consecutive transmembrane segments (helical) span residues 40–60 (VSASSSGAIVTSLFMTPLDVV), 125–145 (LWSGLSPTMVMALPATVFYFT), 178–198 (AVAGIVARTIAVTVVSPIEMI), 225–247 (ISSFYLGWTPTMLRDIPFSGIYW), 269–289 (VVSFVSGAAAGVVASIFTHPF), and 327–348 (FSSGLVPRLVKVSPSCAIMISF).

Belongs to the mitochondrial carrier (TC 2.A.29) family.

It localises to the mitochondrion inner membrane. This is an uncharacterized protein from Caenorhabditis elegans.